Consider the following 325-residue polypeptide: Biotin synthase (325 aa).

The Radical SAM core domain occupies 43 to 262 (CSVETAQLLS…VAVARLLMPR (220 aa)). The [4Fe-4S] cluster site is built by cysteine 58, cysteine 62, and cysteine 65. Positions 102, 133, 193, and 266 each coordinate [2Fe-2S] cluster.

The protein belongs to the radical SAM superfamily. Biotin synthase family. As to quaternary structure, homodimer. It depends on [4Fe-4S] cluster as a cofactor. Requires [2Fe-2S] cluster as cofactor.

It catalyses the reaction (4R,5S)-dethiobiotin + (sulfur carrier)-SH + 2 reduced [2Fe-2S]-[ferredoxin] + 2 S-adenosyl-L-methionine = (sulfur carrier)-H + biotin + 2 5'-deoxyadenosine + 2 L-methionine + 2 oxidized [2Fe-2S]-[ferredoxin]. It functions in the pathway cofactor biosynthesis; biotin biosynthesis; biotin from 7,8-diaminononanoate: step 2/2. Catalyzes the conversion of dethiobiotin (DTB) to biotin by the insertion of a sulfur atom into dethiobiotin via a radical-based mechanism. This Azorhizobium caulinodans (strain ATCC 43989 / DSM 5975 / JCM 20966 / LMG 6465 / NBRC 14845 / NCIMB 13405 / ORS 571) protein is Biotin synthase.